Reading from the N-terminus, the 138-residue chain is Large ribosomal subunit protein uL16 (138 aa).

This sequence belongs to the universal ribosomal protein uL16 family. As to quaternary structure, part of the 50S ribosomal subunit.

Binds 23S rRNA and is also seen to make contacts with the A and possibly P site tRNAs. This Corynebacterium kroppenstedtii (strain DSM 44385 / JCM 11950 / CIP 105744 / CCUG 35717) protein is Large ribosomal subunit protein uL16.